Here is a 175-residue protein sequence, read N- to C-terminus: MAEVHVIGQIMGATGFSESSLFCKWGVHTGAAWKLLSGVREGQTQVDTPQIGDMAYWSHPIDLHFATKGLQGWPRLHLQVWSQDSFGRCQLAGYGFCHVPSSPGTHQLDCPTWRPLGSWREQLARAFVGGGPQLLHGDAIYSGADRYRLHTTSGGTVHLELSLLLRHFDRYGVEC.

The C2 B9-type domain occupies 2-118 (AEVHVIGQIM…DCPTWRPLGS (117 aa)).

This sequence belongs to the B9D family. In terms of assembly, part of the tectonic-like complex (also named B9 complex). Interacts with TUBG1.

Its subcellular location is the cytoplasm. The protein resides in the cytoskeleton. It localises to the cilium basal body. The protein localises to the cilium axoneme. It is found in the nucleus. Component of the tectonic-like complex, a complex localized at the transition zone of primary cilia and acting as a barrier that prevents diffusion of transmembrane proteins between the cilia and plasma membranes. The chain is B9 domain-containing protein 2 (B9D2) from Bos taurus (Bovine).